The sequence spans 470 residues: 3-isopropylmalate dehydratase large subunit (470 aa).

Residues Cys349, Cys410, and Cys413 each coordinate [4Fe-4S] cluster.

Belongs to the aconitase/IPM isomerase family. LeuC type 1 subfamily. Heterodimer of LeuC and LeuD. [4Fe-4S] cluster is required as a cofactor.

The catalysed reaction is (2R,3S)-3-isopropylmalate = (2S)-2-isopropylmalate. The protein operates within amino-acid biosynthesis; L-leucine biosynthesis; L-leucine from 3-methyl-2-oxobutanoate: step 2/4. In terms of biological role, catalyzes the isomerization between 2-isopropylmalate and 3-isopropylmalate, via the formation of 2-isopropylmaleate. The chain is 3-isopropylmalate dehydratase large subunit from Nitrosomonas europaea (strain ATCC 19718 / CIP 103999 / KCTC 2705 / NBRC 14298).